A 266-amino-acid polypeptide reads, in one-letter code: Luciferase (266 aa).

A helical transmembrane segment spans residues 22–41 (GLATACCAVAVASAIAFPYI).

The protein belongs to the fungal luciferase family.

The protein resides in the membrane. The enzyme catalyses 3-hydroxyhispidin + O2 = (E)-caffeoylpyruvate + hnu + CO2. It catalyses the reaction 3-hydroxyhispidin + O2 = 4-[(E)-2-(3,4-dihydroxyphenyl)ethenyl]-1,7-dihydroxy-2,3,5-trioxabicyclo[2.2.2]oct-7-en-6-one. In terms of biological role, luciferase; part of the gene cluster that mediates the fungal bioluminescence cycle. Uses the fungal luciferin 3-hydroxyhispidin as a substrate to produce an endoperoxide as a high-energy intermediate with decomposition that yields oxyluciferin (also known as caffeoylpyruvate) and light emission. The fungal bioluminescence cycle begins with the hispidin synthetase that catalyzes the formation of hispidin which is further hydroxylated by the hispidin-3-hydroxylase, yielding the fungal luciferin 3-hydroxyhispidin. The luciferase then produces an endoperoxide as a high-energy intermediate with decomposition that yields oxyluciferin and light emission. Oxyluciferin can be recycled to caffeic acid by caffeoylpyruvate hydrolase. In Armillaria ostoyae (Armillaria root rot fungus), this protein is Luciferase.